A 591-amino-acid polypeptide reads, in one-letter code: Paxillin (591 aa).

N-acetylmethionine is present on Met1. Positions Asp3 to Thr15 match the LD motif 1 motif. The interval His17–Leu138 is disordered. Tyr31 is subject to Phosphotyrosine; by PTK6. The segment covering Val45–Ser54 has biased composition (pro residues). Polar residues predominate over residues Trp69 to Gln101. Ser83 and Ser85 each carry phosphoserine. Residue Tyr88 is modified to Phosphotyrosine. Phosphoserine is present on Ser106. Tyr118 is subject to Phosphotyrosine; by PTK6. Ser119, Ser126, and Ser130 each carry phosphoserine. Residues Pro121 to Ser137 show a composition bias toward polar residues. Thr132 carries the post-translational modification Phosphothreonine. Ser137, Ser140, and Ser143 each carry phosphoserine. Positions Glu144 to Gln156 match the LD motif 2 motif. The tract at residues Gln156–Val213 is disordered. Residue Tyr181 is modified to Phosphotyrosine. The short motif at Ser216–Val228 is the LD motif 3 element. At Ser230 the chain carries Phosphoserine. Positions Val237 to Ser260 are disordered. Ser244 carries the post-translational modification Phosphoserine; by CDK5. 4 positions are modified to phosphoserine: Ser250, Ser258, Ser261, and Ser272. An LD motif 4 motif is present at residues Glu265 to Phe276. Over residues Arg289–Gly300 the composition is skewed to basic and acidic residues. The segment at Arg289 to Asp335 is disordered. Ser303, Ser322, Ser332, and Ser340 each carry phosphoserine. The LD motif 5 signature appears at Gln333–Leu345. LIM zinc-binding domains lie at Gly356–Pro415, Arg416–Ala473, Pro474–Ser533, and Leu534–Cys591. Ser533 carries the phosphoserine modification.

This sequence belongs to the paxillin family. Binds to vinculin and to the SH3 domain of SRC. Interacts with GIT1, NUDT16L1/SDOS, PARVA, PARVB, SORBS1 and TGFB1I1. Component of cytoplasmic complexes, which also contain GIT1, ARHGEF6 and PAK1. Binds ASAP2. Interacts with RNF5 and PDCD10. Interacts with NEK3 and this interaction is prolactin-dependent. Interacts with PTK2/FAK1 and PTK2B/PYK2. Interacts with PTK6. Interacts with CD36. Interacts (via cytoplasmic domain) with CEACAM1; the interaction is phosphotyrosyl-dependent. Interacts with PXN; this complex stabilizes actin dynamics. Interacts with TRIM15. Interacts with PAK4; PAK4 acts as a scaffold to suppport PAXI phosphorylation at Ser-272. Phosphorylated by MAPK1/ERK2. Phosphorylated on tyrosine residues during integrin-mediated cell adhesion, embryonic development, fibroblast transformation and following stimulation of cells by mitogens. Phosphorylation at Ser-244 by CDK5 reduces its interaction with PTK2/FAK1 in matrix-cell focal adhesions (MCFA) during oligodendrocytes (OLs) differentiation. Phosphorylation at Tyr-31 and Tyr-118 by PTK6 promote the activation of RAC1 via CRK/CrKII, thereby promoting migration and invasion. Phosphorylation at Ser-250 by SLK is required for PXN redistribution and cell motility. Phosphorylation at Ser-272 promotes focal adhesion disassembly during cell migration.

Its subcellular location is the cytoplasm. The protein resides in the cytoskeleton. The protein localises to the cell junction. It is found in the focal adhesion. It localises to the cell cortex. In terms of biological role, cytoskeletal protein involved in actin-membrane attachment at sites of cell adhesion to the extracellular matrix (focal adhesion). Recruits other proteins such as TRIM15 to focal adhesion. This is Paxillin (PXN) from Pongo abelii (Sumatran orangutan).